Consider the following 1298-residue polypeptide: Phosphoribosylformylglycinamidine synthase (1298 aa).

A disordered region spans residues 303 to 327 (FPGAATGSGGEIRDEGATGRGAKPK). Residues 305–316 (GAATGSGGEIRD), 384–386 (TGY), and A676 contribute to the ATP site. The Mg(2+) site is built by D677, E716, N720, and D884. Residue S886 participates in ATP binding. In terms of domain architecture, Glutamine amidotransferase type-1 spans 1045 to 1298 (VAVLREQGVN…MFRNARAWVN (254 aa)). C1138 acts as the Nucleophile in catalysis. Active-site residues include H1263 and E1265.

It in the N-terminal section; belongs to the FGAMS family. As to quaternary structure, monomer.

It localises to the cytoplasm. It catalyses the reaction N(2)-formyl-N(1)-(5-phospho-beta-D-ribosyl)glycinamide + L-glutamine + ATP + H2O = 2-formamido-N(1)-(5-O-phospho-beta-D-ribosyl)acetamidine + L-glutamate + ADP + phosphate + H(+). Its pathway is purine metabolism; IMP biosynthesis via de novo pathway; 5-amino-1-(5-phospho-D-ribosyl)imidazole from N(2)-formyl-N(1)-(5-phospho-D-ribosyl)glycinamide: step 1/2. In terms of biological role, phosphoribosylformylglycinamidine synthase involved in the purines biosynthetic pathway. Catalyzes the ATP-dependent conversion of formylglycinamide ribonucleotide (FGAR) and glutamine to yield formylglycinamidine ribonucleotide (FGAM) and glutamate. The protein is Phosphoribosylformylglycinamidine synthase of Pseudomonas syringae pv. syringae (strain B728a).